A 116-amino-acid chain; its full sequence is MKFTKAEARKRRHFRVRQKVVGTAERPRLNVFKSNTNFYAQIIDDTKGVTLVSASTLKMDLKSKSNTLAAQKVAEEIAKKALAANITQVVFDRNGYLYHGKIKAFAETARENGLKF.

It belongs to the universal ribosomal protein uL18 family. Part of the 50S ribosomal subunit; part of the 5S rRNA/L5/L18/L25 subcomplex. Contacts the 5S and 23S rRNAs.

This is one of the proteins that bind and probably mediate the attachment of the 5S RNA into the large ribosomal subunit, where it forms part of the central protuberance. The polypeptide is Large ribosomal subunit protein uL18 (Mycoplasma mycoides subsp. mycoides SC (strain CCUG 32753 / NCTC 10114 / PG1)).